Here is a 492-residue protein sequence, read N- to C-terminus: MKALKITGLSLIISATLAAQTNAAEPIYPDQLRLFSLGEDVCGTDYRPINREEAQSVRNNIVAMMGQWQISGLANNWVILGPGYNGEIKPGKASTTWCYPTRPATAEIPVLPAFNIPDGDAVDVQWRMVHDSANFIKPVSYLAHYLGYAWVGGDHSQFVGDDMDVIQEGDDWVLRGNDGGKCDGYRCNEKSSIRVSNFAYTLDPGSFSHGDVTQSERTLVHTVVGWATNISDTPQSGYDVTLNYTTMSNWSKTNTYGLSEKVSTKNKFKWPLVGETEVSIEIAANQSWASQNGGAVTTALSQSVRPVVPARSRVPVKIELYKANISYPYEFKADMSYDLTFNGFLRWGGNAWHTHPEDRPTLSHTFAIGPFKDKASSIRYQWDKRYLPGEMKWWDWNWAIQQNGLATMQDSLARVLRPVRASITGDFRAESQFAGNIEIGTPVPLGSDSKVRRTRSVDGANTGLKLDIPLDAQELAELGFENVTLSVTPARN.

Residues 1–21 (MKALKITGLSLIISATLAAQT) form the signal peptide. 2 cysteine pairs are disulfide-bonded: C42–C98 and C182–C187. The tract at residues 68–84 (WQISGLANNWVILGPGY) is interaction with host N-linked glycan. The segment at 256-288 (YGLSEKVSTKNKFKWPLVGETEVSIEIAANQSW) is part of the transmembrane beta-barrel after proteolytic activation of the toxin and insertion into the host membrane. The interaction with glycans from host GPI-anchor stretch occupies residues 346 to 355 (RWGGNAWHTH). The propeptide occupies 446–492 (GSDSKVRRTRSVDGANTGLKLDIPLDAQELAELGFENVTLSVTPARN).

The protein belongs to the aerolysin family. As to quaternary structure, homodimer in solution; homoheptamer in the host membrane. After binding to GPI-anchored proteins in target membranes and proteolytic removal of the C-terminal propeptide, the protein assembles into a heptameric pre-pore complex. A further conformation change leads to insertion into the host membrane. Proteolytic cleavage and subsequent release of the propeptide trigger a major conformation change, leading to the formation of a heptameric pre-pore that then inserts into the host membrane.

Its subcellular location is the secreted. The protein localises to the host cell membrane. Its function is as follows. Secreted, cytolytic toxin that forms pores in host membranes after proteolytic removal of a C-terminal propeptide, leading to destruction of the membrane permeability barrier and cell death. The pores are formed by transmembrane beta-strands and are approximately 3 nm in diameter. This is Aerolysin (aerA) from Aeromonas enteropelogenes (Aeromonas trota).